The following is a 253-amino-acid chain: Small ribosomal subunit protein uS2 (253 aa).

The protein belongs to the universal ribosomal protein uS2 family.

The protein is Small ribosomal subunit protein uS2 of Chlorobium luteolum (strain DSM 273 / BCRC 81028 / 2530) (Pelodictyon luteolum).